The chain runs to 222 residues: MDRPIIVLNFKTYKESTGENALKLAKKCEQVSEEYGVKIIVAPQHMDLRYVSENVNIPVIAQHIDPIDAGGHTGSVLLECAKEAGAKGSLVNHSEKRMKLADISKVVKKLSENDMISIVCTNNVETSAAAAALSPDFVAVEPPELIGSGIPVSKAKPEVVENTVEAVKTVNPDVRVLCGAGISSGEDVKKAVELGTEGVLLASGVILAKDQKKALEELITEM.

Residue 9–11 coordinates substrate; that stretch reads NFK. The Electrophile role is filled by histidine 93. Glutamate 141 acts as the Proton acceptor in catalysis. Residues isoleucine 146, glycine 181, and 202–203 each bind substrate; that span reads AS.

Belongs to the triosephosphate isomerase family. Homotetramer; dimer of dimers.

It localises to the cytoplasm. It catalyses the reaction D-glyceraldehyde 3-phosphate = dihydroxyacetone phosphate. The protein operates within carbohydrate biosynthesis; gluconeogenesis. It functions in the pathway carbohydrate degradation; glycolysis; D-glyceraldehyde 3-phosphate from glycerone phosphate: step 1/1. Functionally, involved in the gluconeogenesis. Catalyzes stereospecifically the conversion of dihydroxyacetone phosphate (DHAP) to D-glyceraldehyde-3-phosphate (G3P). The chain is Triosephosphate isomerase from Methanothermus fervidus (strain ATCC 43054 / DSM 2088 / JCM 10308 / V24 S).